Consider the following 242-residue polypeptide: Biosynthetic peptidoglycan transglycosylase (242 aa).

The chain crosses the membrane as a helical span at residues 19–39 (ILAALAVFWGGGIALFSVVPV).

The protein belongs to the glycosyltransferase 51 family.

The protein resides in the cell inner membrane. The catalysed reaction is [GlcNAc-(1-&gt;4)-Mur2Ac(oyl-L-Ala-gamma-D-Glu-L-Lys-D-Ala-D-Ala)](n)-di-trans,octa-cis-undecaprenyl diphosphate + beta-D-GlcNAc-(1-&gt;4)-Mur2Ac(oyl-L-Ala-gamma-D-Glu-L-Lys-D-Ala-D-Ala)-di-trans,octa-cis-undecaprenyl diphosphate = [GlcNAc-(1-&gt;4)-Mur2Ac(oyl-L-Ala-gamma-D-Glu-L-Lys-D-Ala-D-Ala)](n+1)-di-trans,octa-cis-undecaprenyl diphosphate + di-trans,octa-cis-undecaprenyl diphosphate + H(+). It functions in the pathway cell wall biogenesis; peptidoglycan biosynthesis. Its function is as follows. Peptidoglycan polymerase that catalyzes glycan chain elongation from lipid-linked precursors. The protein is Biosynthetic peptidoglycan transglycosylase of Salmonella paratyphi A (strain ATCC 9150 / SARB42).